The following is a 365-amino-acid chain: Ferredoxin--NADP reductase, chloroplastic (365 aa).

Residues 1–22 (MAAAVTAAVSFPSTKSTPLSTR) form a disordered region. Residues 11–22 (FPSTKSTPLSTR) show a composition bias toward polar residues. Residues 86–208 (KNPYTGRCLL…TGPVGKEMLM (123 aa)) enclose the FAD-binding FR-type domain. FAD-binding positions include 144-147 (RLYS), 165-167 (CVK), Y171, 182-184 (VCS), and T223. S147 and K167 together coordinate NADP(+). NADP(+) is bound by residues T223, 255–256 (VP), 285–286 (SR), K295, 324–325 (GL), and E363.

Belongs to the ferredoxin--NADP reductase type 1 family. FAD is required as a cofactor.

The protein resides in the plastid. It is found in the chloroplast stroma. Its subcellular location is the chloroplast thylakoid membrane. It carries out the reaction 2 reduced [2Fe-2S]-[ferredoxin] + NADP(+) + H(+) = 2 oxidized [2Fe-2S]-[ferredoxin] + NADPH. Its pathway is energy metabolism; photosynthesis. Its function is as follows. May play a key role in regulating the relative amounts of cyclic and non-cyclic electron flow to meet the demands of the plant for ATP and reducing power. In Mesembryanthemum crystallinum (Common ice plant), this protein is Ferredoxin--NADP reductase, chloroplastic (PETH).